The sequence spans 222 residues: Urease accessory protein UreF (222 aa).

This sequence belongs to the UreF family. In terms of assembly, ureD, UreF and UreG form a complex that acts as a GTP-hydrolysis-dependent molecular chaperone, activating the urease apoprotein by helping to assemble the nickel containing metallocenter of UreC. The UreE protein probably delivers the nickel.

The protein resides in the cytoplasm. Required for maturation of urease via the functional incorporation of the urease nickel metallocenter. The sequence is that of Urease accessory protein UreF from Hahella chejuensis (strain KCTC 2396).